Reading from the N-terminus, the 242-residue chain is Protein HTATIP2 (242 aa).

Residue Ala2 is modified to N-acetylalanine. The interval 2-25 is required for interaction with elongation factor EEF1A1; sequence AETEALSKLREDFRMQNKSVFILG. NADPH-binding residues include Ser27, Gly28, Glu29, Thr30, Arg52, Arg53, Leu92, Gly93, Tyr143, Lys147, Leu170, and Arg178. Residue Tyr143 is the Proton acceptor of the active site. The active site involves Lys147.

As to quaternary structure, monomer. Forms homodimers during oxidative stress. Interacts (via N-terminus) with elongation factor EEF1A1 (via middle-region); the interaction is direct and competes with EEF1A1 binding to guanyl-nucleotide exchange factor EEF1B2, thereby inhibiting GDP for GTP exchange and reactivation of EEF1A1. Interacts with nuclear transport receptors XPO4, IPO5/RANBP5, IPO7, IPO9 and KPNB1 as well as GCN1L1/GCN1 and LRPPRC probably through their HEAT repeats. Binds NCOA5/CIA. In terms of assembly, interacts (via N-terminus) with proteasome subunit PSMD4/s5a. (Microbial infection) Interacts with HIV-1 Tat (via activation domain). High levels in liver, lung, skeletal muscle, pancreas and placenta. Moderate levels in heart and kidney. Low levels in brain. Not expressed or low levels in variant small cell lung carcinomas, 33% of hepatocellular carcinomas and neuroblastomas. Levels are reduced in the heart of patients with hypertrophic cardiomyopathy and failing hearts.

The protein localises to the cytoplasm. Represses translation by preventing reactivation of elongation factor eEF1A. May also inhibit nuclear import by competing with nuclear import substrates for binding to a subset of nuclear transport receptors. Has additionally been proposed to act as a redox sensor involved in cellular oxidative stress surveillance. In Homo sapiens (Human), this protein is Protein HTATIP2.